A 377-amino-acid polypeptide reads, in one-letter code: Succinyl-diaminopimelate desuccinylase (377 aa).

Histidine 66 is a binding site for Zn(2+). Residue aspartate 68 is part of the active site. Aspartate 99 is a Zn(2+) binding site. Catalysis depends on glutamate 133, which acts as the Proton acceptor. Positions 134, 162, and 348 each coordinate Zn(2+).

This sequence belongs to the peptidase M20A family. DapE subfamily. In terms of assembly, homodimer. The cofactor is Zn(2+). Co(2+) serves as cofactor.

It catalyses the reaction N-succinyl-(2S,6S)-2,6-diaminopimelate + H2O = (2S,6S)-2,6-diaminopimelate + succinate. The protein operates within amino-acid biosynthesis; L-lysine biosynthesis via DAP pathway; LL-2,6-diaminopimelate from (S)-tetrahydrodipicolinate (succinylase route): step 3/3. Its function is as follows. Catalyzes the hydrolysis of N-succinyl-L,L-diaminopimelic acid (SDAP), forming succinate and LL-2,6-diaminopimelate (DAP), an intermediate involved in the bacterial biosynthesis of lysine and meso-diaminopimelic acid, an essential component of bacterial cell walls. In Methylococcus capsulatus (strain ATCC 33009 / NCIMB 11132 / Bath), this protein is Succinyl-diaminopimelate desuccinylase.